Reading from the N-terminus, the 452-residue chain is Bifunctional protein GlmU (452 aa).

The segment at 1–224 (MNIVILAAGM…EWETHGVNSK (224 aa)) is pyrophosphorylase. UDP-N-acetyl-alpha-D-glucosamine-binding positions include 6–9 (LAAG), Lys-20, Gln-71, 76–77 (GT), 98–100 (YGD), Gly-135, Glu-149, Asn-164, and Asn-222. Asp-100 lines the Mg(2+) pocket. Asn-222 provides a ligand contact to Mg(2+). Residues 225-245 (VQLAELERIHQRNIAHALLEQ) are linker. An N-acetyltransferase region spans residues 246–452 (GVTLADPARI…NWQRPVKIKK (207 aa)). Residues Arg-328 and Lys-346 each coordinate UDP-N-acetyl-alpha-D-glucosamine. The active-site Proton acceptor is the His-358. UDP-N-acetyl-alpha-D-glucosamine is bound by residues Tyr-361 and Asn-372. Residues Ala-375, 381 to 382 (NY), Ser-400, Ala-418, and Arg-435 contribute to the acetyl-CoA site.

This sequence in the N-terminal section; belongs to the N-acetylglucosamine-1-phosphate uridyltransferase family. The protein in the C-terminal section; belongs to the transferase hexapeptide repeat family. As to quaternary structure, homotrimer. It depends on Mg(2+) as a cofactor.

The protein resides in the cytoplasm. The catalysed reaction is alpha-D-glucosamine 1-phosphate + acetyl-CoA = N-acetyl-alpha-D-glucosamine 1-phosphate + CoA + H(+). The enzyme catalyses N-acetyl-alpha-D-glucosamine 1-phosphate + UTP + H(+) = UDP-N-acetyl-alpha-D-glucosamine + diphosphate. Its pathway is nucleotide-sugar biosynthesis; UDP-N-acetyl-alpha-D-glucosamine biosynthesis; N-acetyl-alpha-D-glucosamine 1-phosphate from alpha-D-glucosamine 6-phosphate (route II): step 2/2. It participates in nucleotide-sugar biosynthesis; UDP-N-acetyl-alpha-D-glucosamine biosynthesis; UDP-N-acetyl-alpha-D-glucosamine from N-acetyl-alpha-D-glucosamine 1-phosphate: step 1/1. It functions in the pathway bacterial outer membrane biogenesis; LPS lipid A biosynthesis. Catalyzes the last two sequential reactions in the de novo biosynthetic pathway for UDP-N-acetylglucosamine (UDP-GlcNAc). The C-terminal domain catalyzes the transfer of acetyl group from acetyl coenzyme A to glucosamine-1-phosphate (GlcN-1-P) to produce N-acetylglucosamine-1-phosphate (GlcNAc-1-P), which is converted into UDP-GlcNAc by the transfer of uridine 5-monophosphate (from uridine 5-triphosphate), a reaction catalyzed by the N-terminal domain. The chain is Bifunctional protein GlmU from Janthinobacterium sp. (strain Marseille) (Minibacterium massiliensis).